The primary structure comprises 304 residues: MKARVLAKTWLTHLAVERGLSANTLSNYRRDVERYCDWLEAAGLDDIRDITTAHVESYVKDLRRGIDGQQALSASSAGRALIVARGLHKFALMEGEVAADVAADVSPPAMGRHLPDTLSINEVALLIDAIPHSDIATPVDLRDRALVELLYGTGARISEAIGLAVDDVSEMPEVLRITGKGSKQRIVPFGSMAQQAVREYLVRARPALSKGKSHALFLNQRGGPLSRQSAWAVLKKTVERAGLDKDISPHTLRHSFATHLLEGGADVRVVQELLGHSSVTTTQIYTHITADSLREVWRGAHPRA.

Positions 1 to 92 constitute a Core-binding (CB) domain; the sequence is MKARVLAKTW…VARGLHKFAL (92 aa). The region spanning 113-298 is the Tyr recombinase domain; the sequence is HLPDTLSINE…TADSLREVWR (186 aa). Residues arginine 156, lysine 180, histidine 250, arginine 253, and histidine 276 contribute to the active site. Catalysis depends on tyrosine 285, which acts as the O-(3'-phospho-DNA)-tyrosine intermediate.

It belongs to the 'phage' integrase family. XerD subfamily. Forms a cyclic heterotetrameric complex composed of two molecules of XerC and two molecules of XerD.

It is found in the cytoplasm. Functionally, site-specific tyrosine recombinase, which acts by catalyzing the cutting and rejoining of the recombining DNA molecules. The XerC-XerD complex is essential to convert dimers of the bacterial chromosome into monomers to permit their segregation at cell division. It also contributes to the segregational stability of plasmids. The protein is Tyrosine recombinase XerD of Corynebacterium glutamicum (strain ATCC 13032 / DSM 20300 / JCM 1318 / BCRC 11384 / CCUG 27702 / LMG 3730 / NBRC 12168 / NCIMB 10025 / NRRL B-2784 / 534).